A 346-amino-acid polypeptide reads, in one-letter code: 2,5-dichlorohydroquinone reductive dechlorinase (346 aa).

In terms of domain architecture, GST N-terminal spans 43–154; sequence PRFELFHFVF…YLCDALSGGT (112 aa). Positions 189–335 constitute a GST C-terminal domain; the sequence is DRRPESMQAV…AIIQWPGHPP (147 aa).

It belongs to the GST superfamily.

The enzyme catalyses 2,5-dichlorohydroquinone + 2 glutathione = chlorohydroquinone + glutathione disulfide + chloride + H(+). The catalysed reaction is chlorohydroquinone + 2 glutathione = hydroquinone + glutathione disulfide + chloride + H(+). The protein operates within xenobiotic degradation; gamma-hexachlorocyclohexane degradation. Catalyzes the degradation of 2,5-dichlorohydroquinone (2,5-DCHQ) into hydroquinone (HQ) via chlorohydroquinone (CHQ). Is involved in the degradation pathway that allows S.japonicum UT26 to grow on gamma-hexachlorocyclohexane (gamma-HCH or lindane) as the sole source of carbon and energy. However, the conversion of CHQ to HQ by LinD seems not to be essential for this degradation pathway, because the conversion rate of CHQ to HQ is much lower than that of 2,5-DCHQ to CHQ. CHQ is more efficiently degraded by LinE in strain UT26. The polypeptide is 2,5-dichlorohydroquinone reductive dechlorinase (Sphingobium indicum (strain DSM 16413 / CCM 7287 / MTCC 6362 / UT26 / NBRC 101211 / UT26S) (Sphingobium japonicum)).